The primary structure comprises 415 residues: Gamma-glutamyl phosphate reductase (415 aa).

It belongs to the gamma-glutamyl phosphate reductase family.

It localises to the cytoplasm. It carries out the reaction L-glutamate 5-semialdehyde + phosphate + NADP(+) = L-glutamyl 5-phosphate + NADPH + H(+). The protein operates within amino-acid biosynthesis; L-proline biosynthesis; L-glutamate 5-semialdehyde from L-glutamate: step 2/2. Its function is as follows. Catalyzes the NADPH-dependent reduction of L-glutamate 5-phosphate into L-glutamate 5-semialdehyde and phosphate. The product spontaneously undergoes cyclization to form 1-pyrroline-5-carboxylate. The polypeptide is Gamma-glutamyl phosphate reductase (Bacillus cereus (strain ZK / E33L)).